A 178-amino-acid polypeptide reads, in one-letter code: Cytidylate kinase (178 aa).

7-15 (GLPGTGTTT) is an ATP binding site.

Belongs to the cytidylate kinase family. Type 2 subfamily.

The protein localises to the cytoplasm. The catalysed reaction is CMP + ATP = CDP + ADP. The enzyme catalyses dCMP + ATP = dCDP + ADP. This is Cytidylate kinase from Methanococcus maripaludis (strain C5 / ATCC BAA-1333).